The chain runs to 29 residues: Beta-theraphotoxin-Gr1a (29 aa).

3 disulfides stabilise this stretch: Cys-2/Cys-16, Cys-9/Cys-21, and Cys-15/Cys-25.

The protein belongs to the neurotoxin 30 (phrixotoxin) family. As to expression, expressed by the venom gland.

The protein resides in the secreted. Its function is as follows. Inhibits voltage-gated sodium channels Nav1.1/SCN1A (IC(50)=630 nM), Nav1.2/SCN2A (IC(50)=230 nM), Nav1.3/SCN3A (IC(50)=770 nM), Nav1.4/SCN4A (IC(50)=1290 nM), Nav1.6/SCN8A (IC(50)=630 nM), Nav1.7/SCN9A (IC(50)=15.3-1000 nM) and potassium channels Kv11.1/KCNH2 (IC(50)=4.2 uM). This is Beta-theraphotoxin-Gr1a from Grammostola rosea (Chilean rose tarantula).